Here is a 600-residue protein sequence, read N- to C-terminus: Aspartate--tRNA(Asp/Asn) ligase (600 aa).

Position 174 (glutamate 174) interacts with L-aspartate. The segment at 198–201 (QLFK) is aspartate. Residue arginine 220 coordinates L-aspartate. Residues 220–222 (RDE) and glutamine 229 contribute to the ATP site. Residue histidine 457 participates in L-aspartate binding. Residue glutamate 491 participates in ATP binding. Arginine 498 lines the L-aspartate pocket. 543–546 (GLDR) contacts ATP.

The protein belongs to the class-II aminoacyl-tRNA synthetase family. Type 1 subfamily. As to quaternary structure, homodimer.

Its subcellular location is the cytoplasm. It carries out the reaction tRNA(Asx) + L-aspartate + ATP = L-aspartyl-tRNA(Asx) + AMP + diphosphate. Aspartyl-tRNA synthetase with relaxed tRNA specificity since it is able to aspartylate not only its cognate tRNA(Asp) but also tRNA(Asn). Reaction proceeds in two steps: L-aspartate is first activated by ATP to form Asp-AMP and then transferred to the acceptor end of tRNA(Asp/Asn). The sequence is that of Aspartate--tRNA(Asp/Asn) ligase from Burkholderia orbicola (strain MC0-3).